Here is a 158-residue protein sequence, read N- to C-terminus: 6,7-dimethyl-8-ribityllumazine synthase (158 aa).

5-amino-6-(D-ribitylamino)uracil is bound by residues phenylalanine 22, 57–59, and 84–86; these read AYE and TVI. 89–90 is a binding site for (2S)-2-hydroxy-3-oxobutyl phosphate; the sequence is GT. Residue histidine 92 is the Proton donor of the active site. A 5-amino-6-(D-ribitylamino)uracil-binding site is contributed by phenylalanine 117. Arginine 131 contributes to the (2S)-2-hydroxy-3-oxobutyl phosphate binding site.

This sequence belongs to the DMRL synthase family. In terms of assembly, forms an icosahedral capsid composed of 60 subunits, arranged as a dodecamer of pentamers.

The enzyme catalyses (2S)-2-hydroxy-3-oxobutyl phosphate + 5-amino-6-(D-ribitylamino)uracil = 6,7-dimethyl-8-(1-D-ribityl)lumazine + phosphate + 2 H2O + H(+). It functions in the pathway cofactor biosynthesis; riboflavin biosynthesis; riboflavin from 2-hydroxy-3-oxobutyl phosphate and 5-amino-6-(D-ribitylamino)uracil: step 1/2. Functionally, catalyzes the formation of 6,7-dimethyl-8-ribityllumazine by condensation of 5-amino-6-(D-ribitylamino)uracil with 3,4-dihydroxy-2-butanone 4-phosphate. This is the penultimate step in the biosynthesis of riboflavin. The protein is 6,7-dimethyl-8-ribityllumazine synthase of Pectobacterium carotovorum subsp. carotovorum (strain PC1).